The chain runs to 102 residues: Small ribosomal subunit protein uS10 (102 aa).

This sequence belongs to the universal ribosomal protein uS10 family. As to quaternary structure, part of the 30S ribosomal subunit.

Involved in the binding of tRNA to the ribosomes. This Trichlorobacter lovleyi (strain ATCC BAA-1151 / DSM 17278 / SZ) (Geobacter lovleyi) protein is Small ribosomal subunit protein uS10.